A 160-amino-acid polypeptide reads, in one-letter code: Cytochrome c-type biogenesis protein CcmE (160 aa).

Residues 1-7 are Cytoplasmic-facing; sequence MTRKQRR. A helical; Signal-anchor for type II membrane protein transmembrane segment spans residues 8–28; that stretch reads ATFIAVSLGILALAVGLVLYA. Topologically, residues 29-160 are periplasmic; it reads MRDSIVYFYS…SETYGQGSYP (132 aa). Residues histidine 122 and tyrosine 126 each coordinate heme. The tract at residues 141 to 160 is disordered; that stretch reads WQGEGAEAPHSETYGQGSYP.

It belongs to the CcmE/CycJ family.

Its subcellular location is the cell inner membrane. Its function is as follows. Heme chaperone required for the biogenesis of c-type cytochromes. Transiently binds heme delivered by CcmC and transfers the heme to apo-cytochromes in a process facilitated by CcmF and CcmH. The chain is Cytochrome c-type biogenesis protein CcmE from Parvibaculum lavamentivorans (strain DS-1 / DSM 13023 / NCIMB 13966).